Here is a 389-residue protein sequence, read N- to C-terminus: Meiosis-specific protein MEI4 (389 aa).

Positions M1–D127 are interaction with REC114.

This sequence belongs to the MEI4L family. Part of the MCD recombinosome complex, at least composed of IHO1, REC114 and MEI4. Forms a complex with REC114; the interaction is required for MEI4 stability. Interacts (via N-terminal domain) with REC114 (via C-terminal domain). Interacts with IHO1. In terms of tissue distribution, expressed in adult testis and brain and in embryonic ovary.

Its subcellular location is the chromosome. Its function is as follows. Required for DNA double-strand breaks (DSBs) formation in unsynapsed regions during meiotic recombination. Probably acts by forming a complex with IHO1 and REC114, which activates DSBs formation in unsynapsed regions, an essential step to ensure completion of synapsis. This Mus musculus (Mouse) protein is Meiosis-specific protein MEI4.